Reading from the N-terminus, the 1226-residue chain is Double-stranded RNA-specific adenosine deaminase (1226 aa).

Arg-26 carries the asymmetric dimethylarginine modification. The Z-binding 1 domain maps to 133-199 (LSIYQDQEQR…GTPPLWKIAV (67 aa)). Positions 133-202 (LSIYQDQEQR…PLWKIAVSTQ (70 aa)) are interaction with Z-DNA. 2 disordered regions span residues 208-238 (SGVV…TSVS) and 258-286 (GVVR…STSA). Phosphoserine is present on Ser-285. Residues 293–357 (FLDMAEIKEK…TTPPIWHLTD (65 aa)) form the Z-binding 2 domain. Glycyl lysine isopeptide (Lys-Gly) (interchain with G-Cter in SUMO2) cross-links involve residues Lys-384 and Lys-408. Residue Lys-418 forms a Glycyl lysine isopeptide (Lys-Gly) (interchain with G-Cter in SUMO); alternate linkage. Lys-418 is covalently cross-linked (Glycyl lysine isopeptide (Lys-Gly) (interchain with G-Cter in SUMO1); alternate). Lys-418 participates in a covalent cross-link: Glycyl lysine isopeptide (Lys-Gly) (interchain with G-Cter in SUMO2); alternate. Phosphoserine is present on Ser-481. The DRBM 1 domain maps to 503-571 (NPISGLLEYA…AMKAMTILLE (69 aa)). The span at 574 to 597 (KAKDSGKSEESSHYSTEKESEKTA) shows a compositional bias: basic and acidic residues. Residues 574-610 (KAKDSGKSEESSHYSTEKESEKTAESQTPTPSATSFF) form a disordered region. Lys-580 is covalently cross-linked (Glycyl lysine isopeptide (Lys-Gly) (interchain with G-Cter in SUMO2)). A compositionally biased stretch (polar residues) spans 600–610 (QTPTPSATSFF). Thr-601 and Thr-603 each carry phosphothreonine. Ser-614, Ser-629, and Ser-636 each carry phosphoserine. Residues 614-682 (SPVTTLLECM…AEEAMKALHG (69 aa)) form the DRBM 2 domain. The segment at 716 to 725 (IGELVRYLNT) is N-terminal extension of DRBM 3 and constituent of a bi-partite nuclear localization signal. The DRBM 3 domain occupies 726 to 794 (NPVGGLLEYA…ADAALRVLIG (69 aa)). Residues 795–801 (ENEKAER) are C-terminal extension of DRBM 3 and constituent of a bi-partite nuclear localization signal. Thr-808 is modified (phosphothreonine). Phosphoserine occurs at positions 814, 823, and 825. A Glycyl lysine isopeptide (Lys-Gly) (interchain with G-Cter in SUMO2) cross-link involves residue Lys-875. An A to I editase domain is found at 886 to 1221 (SLGTGNRCVK…ISKPQEEKNF (336 aa)). Zn(2+) is bound at residue His-910. The Proton donor role is filled by Glu-912. Positions 966 and 1036 each coordinate Zn(2+).

As to quaternary structure, homodimer. Homodimerization is essential for its catalytic activity. Isoform 5 can form heterodimers with ADARB1/ADAR2. Isoform 1 interacts with ILF2/NF45 and ILF3/NF90. Binding to ILF3/NF90 up-regulates ILF3-mediated gene expression. Isoform 1 and isoform 5 (via DRBM 3 domain) interact with TNPO1. Isoform 5 (via DRBM domains) interacts with XPO5. Isoform 1 and isoform 5 can interact with EIF2AK2/PKR and UPF1. Post-translationally, sumoylation reduces RNA-editing activity. As to expression, ubiquitously expressed, highest levels were found in brain and lung. Isoform 5 is expressed at higher levels in astrocytomas as compared to normal brain tissue and expression increases strikingly with the severity of the tumor, being higher in the most aggressive tumors.

The protein resides in the cytoplasm. The protein localises to the nucleus. Its subcellular location is the nucleolus. It catalyses the reaction adenosine in double-stranded RNA + H2O + H(+) = inosine in double-stranded RNA + NH4(+). Functionally, catalyzes the hydrolytic deamination of adenosine to inosine in double-stranded RNA (dsRNA) referred to as A-to-I RNA editing. This may affect gene expression and function in a number of ways that include mRNA translation by changing codons and hence the amino acid sequence of proteins since the translational machinery read the inosine as a guanosine; pre-mRNA splicing by altering splice site recognition sequences; RNA stability by changing sequences involved in nuclease recognition; genetic stability in the case of RNA virus genomes by changing sequences during viral RNA replication; and RNA structure-dependent activities such as microRNA production or targeting or protein-RNA interactions. Can edit both viral and cellular RNAs and can edit RNAs at multiple sites (hyper-editing) or at specific sites (site-specific editing). Its cellular RNA substrates include: bladder cancer-associated protein (BLCAP), neurotransmitter receptors for glutamate (GRIA2) and serotonin (HTR2C) and GABA receptor (GABRA3). Site-specific RNA editing of transcripts encoding these proteins results in amino acid substitutions which consequently alters their functional activities. Exhibits low-level editing at the GRIA2 Q/R site, but edits efficiently at the R/G site and HOTSPOT1. Its viral RNA substrates include: hepatitis C virus (HCV), vesicular stomatitis virus (VSV), measles virus (MV), hepatitis delta virus (HDV), and human immunodeficiency virus type 1 (HIV-1). Exhibits either a proviral (HDV, MV, VSV and HIV-1) or an antiviral effect (HCV) and this can be editing-dependent (HDV and HCV), editing-independent (VSV and MV) or both (HIV-1). Impairs HCV replication via RNA editing at multiple sites. Enhances the replication of MV, VSV and HIV-1 through an editing-independent mechanism via suppression of EIF2AK2/PKR activation and function. Stimulates both the release and infectivity of HIV-1 viral particles by an editing-dependent mechanism where it associates with viral RNAs and edits adenosines in the 5'UTR and the Rev and Tat coding sequence. Can enhance viral replication of HDV via A-to-I editing at a site designated as amber/W, thereby changing an UAG amber stop codon to an UIG tryptophan (W) codon that permits synthesis of the large delta antigen (L-HDAg) which has a key role in the assembly of viral particles. However, high levels of ADAR1 inhibit HDV replication. This chain is Double-stranded RNA-specific adenosine deaminase (ADAR), found in Homo sapiens (Human).